Here is a 352-residue protein sequence, read N- to C-terminus: Type II restriction enzyme HaeII (352 aa).

The enzyme catalyses Endonucleolytic cleavage of DNA to give specific double-stranded fragments with terminal 5'-phosphates.. In terms of biological role, a P subtype restriction enzyme that recognizes the double-stranded sequence 5'-RGCGCY-3' and cleaves after C-5. The protein is Type II restriction enzyme HaeII (haeIIR) of Haemophilus aegyptius.